Consider the following 423-residue polypeptide: G-protein coupled receptor 83 (423 aa).

The N-terminal stretch at 1 to 17 (MKVPPVLLLFLLSSVRA) is a signal peptide. At 18–71 (TEQPQVVTEHPSMEAALTGPNASSHFWANYTFSDWQNFVGRRRYGAESQNPTVK) the chain is on the extracellular side. N-linked (GlcNAc...) asparagine glycans are attached at residues Asn38 and Asn46. A helical transmembrane segment spans residues 72–92 (ALLIVAYSFTIVFSLFGNVLV). At 93 to 107 (CHVIFKNQRMHSATS) the chain is on the cytoplasmic side. A helical transmembrane segment spans residues 108–129 (LFIVNLAVADIMITLLNTPFTL). Topologically, residues 130–145 (VRFVNSTWVFGKGMCH) are extracellular. N-linked (GlcNAc...) asparagine glycosylation occurs at Asn134. Cys144 and Cys224 form a disulfide bridge. Residues 146–167 (VSRFAQYCSLHVSALTLTAIAV) form a helical membrane-spanning segment. Over 168–186 (DRHQVIMHPLKPRISITKG) the chain is Cytoplasmic. Residues 187 to 208 (VIYIAVIWVMATFFSLPHAICQ) traverse the membrane as a helical segment. At 209–238 (KLFTFKYSEDIVRSLCLPDFPEPADLFWKY) the chain is on the extracellular side. The helical transmembrane segment at 239–260 (LDLATFILLYLLPLFIISVAYA) threads the bilayer. Over 261 to 293 (RVAKKLWLCNTIGDVTTEQYLALRRKKKTTVKM) the chain is Cytoplasmic. Residues 294–315 (LVLVVVLFALCWFPLNCYVLLL) form a helical membrane-spanning segment. Topologically, residues 316–327 (SSKAIHTNNALY) are extracellular. Residues 328–348 (FAFHWFAMSSTCYNPFIYCWL) traverse the membrane as a helical segment. At 349–423 (NENFRVELKA…SSVEPVVAMS (75 aa)) the chain is on the cytoplasmic side. A disordered region spans residues 389–423 (SHGRRAPLPNHHLPSSQIQSGKTDLSSVEPVVAMS). Positions 401–414 (LPSSQIQSGKTDLS) are enriched in polar residues.

It belongs to the G-protein coupled receptor 1 family. As to expression, predominantly expressed in the brain, with moderate expression in the hypothalamus. Expressed in the thymus.

Its subcellular location is the cell membrane. In terms of biological role, G-protein coupled receptor for PEN, a neuropeptide produced from the precursor protein, proSAAS (encoded by PCSK1N). Acts through a G(i)- and G(q)-alpha-alpha-mediated pathway in response to PEN. Plays a role in food intake and body weight regulation. May contribute to the regulation of anxiety-related behaviors. The protein is G-protein coupled receptor 83 of Mus musculus (Mouse).